The primary structure comprises 100 residues: Cytochrome c2 iso-1 (100 aa).

Heme c-binding residues include C11, C14, H15, and M76.

This sequence belongs to the cytochrome c family. Post-translationally, binds 1 heme c group covalently per subunit.

Its function is as follows. Cytochrome c2 is found mainly in purple, non-sulfur, photosynthetic bacteria where it functions as the electron donor to the oxidized bacteriochlorophyll in the photophosphorylation pathway. However, it may also have a role in the respiratory chain and is found in some non-photosynthetic bacteria. This Magnetospirillum molischianum (Rhodospirillum molischianum) protein is Cytochrome c2 iso-1.